Here is a 649-residue protein sequence, read N- to C-terminus: 1-deoxy-D-xylulose-5-phosphate synthase (649 aa).

Residues His-74 and 115–117 each bind thiamine diphosphate; that span reads GHA. Asp-146 serves as a coordination point for Mg(2+). Thiamine diphosphate is bound by residues 147–148, Asn-176, Tyr-292, and Glu-375; that span reads GA. Asn-176 is a binding site for Mg(2+).

Belongs to the transketolase family. DXPS subfamily. In terms of assembly, homodimer. Mg(2+) is required as a cofactor. It depends on thiamine diphosphate as a cofactor.

The catalysed reaction is D-glyceraldehyde 3-phosphate + pyruvate + H(+) = 1-deoxy-D-xylulose 5-phosphate + CO2. It functions in the pathway metabolic intermediate biosynthesis; 1-deoxy-D-xylulose 5-phosphate biosynthesis; 1-deoxy-D-xylulose 5-phosphate from D-glyceraldehyde 3-phosphate and pyruvate: step 1/1. Functionally, catalyzes the acyloin condensation reaction between C atoms 2 and 3 of pyruvate and glyceraldehyde 3-phosphate to yield 1-deoxy-D-xylulose-5-phosphate (DXP). This Synechococcus sp. (strain JA-3-3Ab) (Cyanobacteria bacterium Yellowstone A-Prime) protein is 1-deoxy-D-xylulose-5-phosphate synthase.